An 802-amino-acid chain; its full sequence is Homeobox-leucine zipper protein ANTHOCYANINLESS 2 (802 aa).

Residues 71 to 143 (QPERGTNRGE…RKKRYHRHTP (73 aa)) are disordered. The segment covering 103 to 113 (RSREEEHESRS) has biased composition (basic and acidic residues). Residues 133–142 (PRKKRYHRHT) are compositionally biased toward basic residues. Positions 134 to 193 (RKKRYHRHTPQQIQELESMFKECPHPDEKQRLELSKRLCLETRQVKFWFQNRRTQMKTQL) form a DNA-binding region, homeobox. Residues 182-221 (FQNRRTQMKTQLERHENALLRQENDKLRAENMSIREAMRN) adopt a coiled-coil conformation. One can recognise an START domain in the interval 315–546 (GIDQKSVLLE…LQRQCECLAI (232 aa)).

The protein belongs to the HD-ZIP homeobox family. Class IV subfamily. As to quaternary structure, interacts with AIL7/PLT7, ANT, BBM and AIL1. Expressed in roots, stems, leaves and floral buds.

It localises to the nucleus. Functionally, probable transcription factor involved in the regulation of the tissue-specific accumulation of anthocyanins and in cellular organization of the primary root. The sequence is that of Homeobox-leucine zipper protein ANTHOCYANINLESS 2 from Arabidopsis thaliana (Mouse-ear cress).